Consider the following 570-residue polypeptide: Nucleoprotein (570 aa).

Residues 54–236 (LRKTKRTDDD…ITKEESSINI (183 aa)) are binding site for the cap structure m7GTP. Positions 332-356 (DLTKKPDAVPEPGAAPRPAERKGQN) are disordered. Positions 386 and 388 each coordinate Mg(2+). 2 residues coordinate Mn(2+): Asp386 and Glu388. The Zn(2+) site is built by Glu396, Cys503, His506, and Cys531. Asp535 contributes to the Mg(2+) binding site. Residue Asp535 participates in Mn(2+) binding.

The protein belongs to the arenaviridae nucleocapsid protein family. In terms of assembly, homomultimerizes to form the nucleocapsid. Binds to viral genomic RNA. Interacts with glycoprotein G2. Interacts with protein Z; this interaction probably directs the encapsidated genome to budding sites. Interacts with protein L; this interaction does not interfere with Z-L interaction. Interacts with host IKBKE (via Protein kinase domain); the interaction inhibits IKBKE kinase activity.

Its subcellular location is the virion. The protein localises to the host cytoplasm. Its function is as follows. Encapsidates the genome, protecting it from nucleases. The encapsidated genomic RNA is termed the nucleocapsid (NC). Serves as template for viral transcription and replication. The increased presence of protein N in host cell does not seem to trigger the switch from transcription to replication as observed in other negative strain RNA viruses. Through the interaction with host IKBKE, strongly inhibits the phosphorylation and nuclear translocation of host IRF3, a protein involved in interferon activation pathway, leading to the inhibition of interferon-beta and IRF3-dependent promoters activation. Also encodes a functional 3'-5' exoribonuclease that degrades preferentially dsRNA substrates and thereby participates in the suppression of interferon induction. This is Nucleoprotein from Artibeus (neotropical fruit bats).